A 147-amino-acid chain; its full sequence is Hemoglobin subunit delta (147 aa).

In terms of domain architecture, Globin spans H3–H147. S51 carries the phosphoserine modification. Heme b is bound by residues H64 and H93.

This sequence belongs to the globin family. As to quaternary structure, heterotetramer of two delta chains and two alpha chains. Red blood cells.

This chain is Hemoglobin subunit delta (HBD), found in Gorilla gorilla gorilla (Western lowland gorilla).